Here is a 302-residue protein sequence, read N- to C-terminus: Ornithine carbamoyltransferase (302 aa).

Carbamoyl phosphate-binding positions include 53-56 (STRT), glutamine 80, arginine 104, and 131-134 (HPCQ). Residues asparagine 162, aspartate 219, and 223-224 (SM) each bind L-ornithine. Carbamoyl phosphate is bound by residues 259–260 (CL) and arginine 287.

The protein belongs to the aspartate/ornithine carbamoyltransferase superfamily. OTCase family.

Its subcellular location is the cytoplasm. It carries out the reaction carbamoyl phosphate + L-ornithine = L-citrulline + phosphate + H(+). It functions in the pathway amino-acid biosynthesis; L-arginine biosynthesis; L-arginine from L-ornithine and carbamoyl phosphate: step 1/3. Its function is as follows. Reversibly catalyzes the transfer of the carbamoyl group from carbamoyl phosphate (CP) to the N(epsilon) atom of ornithine (ORN) to produce L-citrulline. This Hydrogenovibrio crunogenus (strain DSM 25203 / XCL-2) (Thiomicrospira crunogena) protein is Ornithine carbamoyltransferase.